The following is a 266-amino-acid chain: Glucosamine-6-phosphate deaminase (266 aa).

The active-site Proton acceptor; for enolization step is D72. The active-site For ring-opening step is D141. The Proton acceptor; for ring-opening step role is filled by H143. E148 (for ring-opening step) is an active-site residue.

It belongs to the glucosamine/galactosamine-6-phosphate isomerase family. NagB subfamily. As to quaternary structure, homohexamer.

It carries out the reaction alpha-D-glucosamine 6-phosphate + H2O = beta-D-fructose 6-phosphate + NH4(+). It functions in the pathway amino-sugar metabolism; N-acetylneuraminate degradation; D-fructose 6-phosphate from N-acetylneuraminate: step 5/5. Its activity is regulated as follows. Allosterically activated by N-acetylglucosamine 6-phosphate (GlcNAc6P). In terms of biological role, catalyzes the reversible isomerization-deamination of glucosamine 6-phosphate (GlcN6P) to form fructose 6-phosphate (Fru6P) and ammonium ion. The polypeptide is Glucosamine-6-phosphate deaminase (Klebsiella pneumoniae (strain 342)).